A 339-amino-acid chain; its full sequence is Tetraacyldisaccharide 4'-kinase (339 aa).

58–65 (TVGGSGKT) serves as a coordination point for ATP.

This sequence belongs to the LpxK family.

It carries out the reaction a lipid A disaccharide + ATP = a lipid IVA + ADP + H(+). Its pathway is glycolipid biosynthesis; lipid IV(A) biosynthesis; lipid IV(A) from (3R)-3-hydroxytetradecanoyl-[acyl-carrier-protein] and UDP-N-acetyl-alpha-D-glucosamine: step 6/6. Transfers the gamma-phosphate of ATP to the 4'-position of a tetraacyldisaccharide 1-phosphate intermediate (termed DS-1-P) to form tetraacyldisaccharide 1,4'-bis-phosphate (lipid IVA). This chain is Tetraacyldisaccharide 4'-kinase, found in Shewanella baltica (strain OS195).